A 398-amino-acid chain; its full sequence is ATP-dependent RNA helicase RhlB (398 aa).

A Q motif motif is present at residues T9–A37. A Helicase ATP-binding domain is found at L40–V220. A53–T60 is a binding site for ATP. The DEAD box motif lies at D166–D169. In terms of domain architecture, Helicase C-terminal spans D243–V393.

It belongs to the DEAD box helicase family. RhlB subfamily. In terms of assembly, component of the RNA degradosome, which is a multiprotein complex involved in RNA processing and mRNA degradation.

It is found in the cytoplasm. The catalysed reaction is ATP + H2O = ADP + phosphate + H(+). DEAD-box RNA helicase involved in RNA degradation. Has RNA-dependent ATPase activity and unwinds double-stranded RNA. The polypeptide is ATP-dependent RNA helicase RhlB (Pseudomonas putida (strain ATCC 47054 / DSM 6125 / CFBP 8728 / NCIMB 11950 / KT2440)).